The primary structure comprises 400 residues: Acetate kinase (400 aa).

N10 provides a ligand contact to Mg(2+). K17 is an ATP binding site. A substrate-binding site is contributed by R91. D150 functions as the Proton donor/acceptor in the catalytic mechanism. ATP contacts are provided by residues 210–214 (HLGGG), 285–287 (DFR), and 333–337 (GIGEN). E387 provides a ligand contact to Mg(2+).

The protein belongs to the acetokinase family. Homodimer. Mg(2+) is required as a cofactor. Mn(2+) serves as cofactor.

The protein localises to the cytoplasm. The enzyme catalyses acetate + ATP = acetyl phosphate + ADP. The protein operates within metabolic intermediate biosynthesis; acetyl-CoA biosynthesis; acetyl-CoA from acetate: step 1/2. In terms of biological role, catalyzes the formation of acetyl phosphate from acetate and ATP. Can also catalyze the reverse reaction. In Buchnera aphidicola subsp. Baizongia pistaciae (strain Bp), this protein is Acetate kinase.